The following is a 575-amino-acid chain: Amino-acid acetyltransferase, mitochondrial (575 aa).

The transit peptide at 1 to 35 (MSKLRNLNRQFISNLKTHETVTNAKRNLILSILKS) directs the protein to the mitochondrion. Residues 398–557 (FTLNNLVQDG…QGIPGGVNIH (160 aa)) form the N-acetyltransferase domain.

Belongs to the acetyltransferase family.

It localises to the mitochondrion. It carries out the reaction L-glutamate + acetyl-CoA = N-acetyl-L-glutamate + CoA + H(+). It functions in the pathway amino-acid biosynthesis; L-arginine biosynthesis; N(2)-acetyl-L-ornithine from L-glutamate: step 1/4. N-acetylglutamate synthase involved in arginine biosynthesis. This chain is Amino-acid acetyltransferase, mitochondrial (ARG2), found in Debaryomyces hansenii (strain ATCC 36239 / CBS 767 / BCRC 21394 / JCM 1990 / NBRC 0083 / IGC 2968) (Yeast).